The following is a 558-amino-acid chain: Membrane protein insertase YidC (558 aa).

The next 6 helical transmembrane spans lie at 6-26 (VIAA…FFQP), 326-348 (LAID…DYFF), 355-377 (GLAI…NFSF), 424-444 (LPIL…FVTI), 469-489 (VFGL…WPII), and 512-532 (IFMF…AGLV).

Belongs to the OXA1/ALB3/YidC family. Type 1 subfamily. Interacts with the Sec translocase complex via SecD. Specifically interacts with transmembrane segments of nascent integral membrane proteins during membrane integration.

Its subcellular location is the cell inner membrane. Required for the insertion and/or proper folding and/or complex formation of integral membrane proteins into the membrane. Involved in integration of membrane proteins that insert both dependently and independently of the Sec translocase complex, as well as at least some lipoproteins. Aids folding of multispanning membrane proteins. The protein is Membrane protein insertase YidC of Pelagibacter ubique (strain HTCC1062).